The sequence spans 256 residues: Imidazole glycerol phosphate synthase subunit HisF (256 aa).

Residues Asp12 and Asp131 contribute to the active site.

This sequence belongs to the HisA/HisF family. In terms of assembly, heterodimer of HisH and HisF.

Its subcellular location is the cytoplasm. It catalyses the reaction 5-[(5-phospho-1-deoxy-D-ribulos-1-ylimino)methylamino]-1-(5-phospho-beta-D-ribosyl)imidazole-4-carboxamide + L-glutamine = D-erythro-1-(imidazol-4-yl)glycerol 3-phosphate + 5-amino-1-(5-phospho-beta-D-ribosyl)imidazole-4-carboxamide + L-glutamate + H(+). The protein operates within amino-acid biosynthesis; L-histidine biosynthesis; L-histidine from 5-phospho-alpha-D-ribose 1-diphosphate: step 5/9. IGPS catalyzes the conversion of PRFAR and glutamine to IGP, AICAR and glutamate. The HisF subunit catalyzes the cyclization activity that produces IGP and AICAR from PRFAR using the ammonia provided by the HisH subunit. The protein is Imidazole glycerol phosphate synthase subunit HisF of Bifidobacterium longum (strain NCC 2705).